Consider the following 582-residue polypeptide: Poly(A) RNA polymerase, mitochondrial (582 aa).

Residues 1-37 (MAVPGVGLLTRLNLCARRRTRVQRPIVRLLSCPGTVA) constitute a mitochondrion transit peptide. Position 90 is an N6-acetyllysine (Lys-90). ATP contacts are provided by residues 107–109 (YES) and 241–242 (GC). 2 residues coordinate Mg(2+): Asp-243 and Asp-245. Residues 437–483 (LELLLKEFFEYFGNFAFDKNSINIRQGREQNKPDSSPLYIQNPFETS) form the PAP-associated domain.

The protein belongs to the DNA polymerase type-B-like family. As to quaternary structure, homodimer. It depends on Mg(2+) as a cofactor. Mn(2+) serves as cofactor. As to expression, ubiquitous, with stronger expression in tissues with high energy requirements: heart, brain, and skeletal muscle.

Its subcellular location is the cytoplasm. It is found in the mitochondrion. The catalysed reaction is RNA(n) + ATP = RNA(n)-3'-adenine ribonucleotide + diphosphate. Functionally, polymerase that creates the 3' poly(A) tail of mitochondrial transcripts. Can use all four nucleotides, but has higher activity with ATP and UTP (in vitro). Plays a role in replication-dependent histone mRNA degradation. May be involved in the terminal uridylation of mature histone mRNAs before their degradation is initiated. Might be responsible for the creation of some UAA stop codons which are not encoded in mtDNA. This is Poly(A) RNA polymerase, mitochondrial (MTPAP) from Homo sapiens (Human).